The following is a 153-amino-acid chain: 3-hydroxyacyl-[acyl-carrier-protein] dehydratase FabZ (153 aa).

The active site involves His-58.

This sequence belongs to the thioester dehydratase family. FabZ subfamily.

It localises to the cytoplasm. It catalyses the reaction a (3R)-hydroxyacyl-[ACP] = a (2E)-enoyl-[ACP] + H2O. Involved in unsaturated fatty acids biosynthesis. Catalyzes the dehydration of short chain beta-hydroxyacyl-ACPs and long chain saturated and unsaturated beta-hydroxyacyl-ACPs. The sequence is that of 3-hydroxyacyl-[acyl-carrier-protein] dehydratase FabZ from Bradyrhizobium diazoefficiens (strain JCM 10833 / BCRC 13528 / IAM 13628 / NBRC 14792 / USDA 110).